The following is a 280-amino-acid chain: Fructose-1,6-bisphosphatase class 1 (280 aa).

Mg(2+)-binding residues include E64, D83, L85, and D86. Substrate-binding positions include 86 to 89 (DGSS), Y189, and K220. E226 contributes to the Mg(2+) binding site.

This sequence belongs to the FBPase class 1 family. As to quaternary structure, homotetramer. Mg(2+) serves as cofactor.

It localises to the cytoplasm. The enzyme catalyses beta-D-fructose 1,6-bisphosphate + H2O = beta-D-fructose 6-phosphate + phosphate. It functions in the pathway carbohydrate biosynthesis; gluconeogenesis. This chain is Fructose-1,6-bisphosphatase class 1, found in Campylobacter jejuni (strain RM1221).